Consider the following 395-residue polypeptide: Fractalkine (395 aa).

A signal peptide spans 1–24 (MAPSPLAWLLRLAAFFHLCTLLPG). Residues 25-100 (QHLGMTKCEI…HQAAALTKNG (76 aa)) form a chemokine and involved in interaction with ITGAV:ITGB3 and ITGA4:ITGB1 region. At 25-336 (QHLGMTKCEI…TPVPDTQAAT (312 aa)) the chain is on the extracellular side. 2 disulfides stabilise this stretch: Cys32/Cys58 and Cys36/Cys74. Positions 101–336 (GKFEKRVDNV…TPVPDTQAAT (236 aa)) are mucin-like stalk. 2 stretches are compositionally biased toward polar residues: residues 148–172 (ARGT…TSEA) and 201–210 (AVYQSGSSSW). 2 disordered regions span residues 148-180 (ARGT…LTAK) and 201-305 (AVYQ…SGSQ). Residues 218-236 (SPSTTAPSPQVSTTSPSTP) are compositionally biased toward low complexity. The chain crosses the membrane as a helical span at residues 337–357 (RRQAVGLLAFLGLLFCLGVAM). Topologically, residues 358 to 395 (FAYQSLQGCPRKMAGEMVEGLRYVPRSCGSNSYVLVPV) are cytoplasmic.

This sequence belongs to the intercrine delta family. As to quaternary structure, monomer. Forms a ternary complex with CX3CR1 and ITGAV:ITGB3 or ITGA4:ITGB1. In terms of processing, a soluble short 80 kDa form may be released by proteolytic cleavage from the long membrane-anchored form. As to expression, highest levels in brain. Lower levels in kidney, heart and lung. Also found in skeletal muscle and testis. Highly expressed in lesional smooth muscle cells, but not macrophages. Low levels of ABCD-3 mRNA were also found in anti-CD40-stimulated splenic B-cells, but not in resting B-cells. Also expressed in dendritic cells.

Its subcellular location is the cell membrane. The protein resides in the secreted. Its function is as follows. Chemokine that acts as a ligand for both CX3CR1 and integrins ITGAV:ITGB3 and ITGA4:ITGB1. The CX3CR1-CX3CL1 signaling exerts distinct functions in different tissue compartments, such as immune response, inflammation, cell adhesion and chemotaxis. Regulates leukocyte adhesion and migration processes at the endothelium. Can activate integrins in both a CX3CR1-dependent and CX3CR1-independent manner. In the presence of CX3CR1, activates integrins by binding to the classical ligand-binding site (site 1) in integrins. In the absence of CX3CR1, binds to a second site (site 2) in integrins which is distinct from site 1 and enhances the binding of other integrin ligands to site 1. In terms of biological role, the soluble form is chemotactic for T-cells and monocytes, but not for neutrophils. Functionally, the membrane-bound form promotes adhesion of those leukocytes to endothelial cells. The chain is Fractalkine from Mus musculus (Mouse).